Consider the following 443-residue polypeptide: D-lactate dehydrogenase (443 aa).

At 1–182 the chain is on the extracellular side; the sequence is MSWIDELSKI…GGKTIKNSSG (182 aa). The region spanning 32-209 is the FAD-binding PCMH-type domain; sequence RAAENFVVVK…TKATIRLFPQ (178 aa). A helical membrane pass occupies residues 183-203; the sequence is YSLLHLLVGSEGTLAVITKAT. Residues 204-383 lie on the Cytoplasmic side of the membrane; that stretch reads IRLFPQMRDM…WEKSYFEFRK (180 aa). Residues 384 to 404 traverse the membrane as a helical segment; the sequence is SLLSLAVSLGGVISGEHGIGA. Topologically, residues 405 to 443 are extracellular; sequence VKLSELEELFPEQFELMRQIKLLFDPKNILNPGKVVRKL.

This sequence belongs to the FAD-binding oxidoreductase/transferase type 4 family. FAD serves as cofactor. Requires Zn(2+) as cofactor.

It localises to the cell membrane. The enzyme catalyses (R)-lactate + A = pyruvate + AH2. In terms of biological role, catalyzes the dehydrogenation of (R)-lactate (D-lactate) to pyruvate. Is likely involved in the utilization of D-lactate as a sole source for both carbon and electrons for dissimilatory sulfate reduction. Cannot use L-lactate as substrate, and NAD(+), horse cytochrome c, methylene blue or dimethylnaphthoquinone as acceptors. Active in vitro with artificial electron acceptors such as 2,6-dichlorophenolindophenol (DCPIP); the physiological acceptor is not known, but potential acceptors include cytochromes or quinones. This chain is D-lactate dehydrogenase, found in Archaeoglobus fulgidus (strain ATCC 49558 / DSM 4304 / JCM 9628 / NBRC 100126 / VC-16).